The sequence spans 132 residues: Small ribosomal subunit protein uS12 (132 aa).

Position 89 is a 3-methylthioaspartic acid (aspartate 89). The tract at residues 103 to 132 is disordered; sequence DTSGVADRRQSRSKYGAKQPKEGGAAKGKK.

The protein belongs to the universal ribosomal protein uS12 family. Part of the 30S ribosomal subunit. Contacts proteins S8 and S17. May interact with IF1 in the 30S initiation complex.

In terms of biological role, with S4 and S5 plays an important role in translational accuracy. Interacts with and stabilizes bases of the 16S rRNA that are involved in tRNA selection in the A site and with the mRNA backbone. Located at the interface of the 30S and 50S subunits, it traverses the body of the 30S subunit contacting proteins on the other side and probably holding the rRNA structure together. The combined cluster of proteins S8, S12 and S17 appears to hold together the shoulder and platform of the 30S subunit. This Chlorobium phaeovibrioides (strain DSM 265 / 1930) (Prosthecochloris vibrioformis (strain DSM 265)) protein is Small ribosomal subunit protein uS12.